The chain runs to 466 residues: F-box only protein 15 (466 aa).

An F-box domain is found at 27–73 (SASLDSLPSEVLLKILSYLDAAALLCAGCVNRRFYHLANDNFIWIRI).

In terms of assembly, directly interacts with SKP1 and CUL1.

Its function is as follows. Substrate-recognition component of the SCF (SKP1-CUL1-F-box protein)-type E3 ubiquitin ligase complex. The chain is F-box only protein 15 (FBXO15) from Bos taurus (Bovine).